A 144-amino-acid polypeptide reads, in one-letter code: MIAFAKQYRVHISPQKARLVCQLIVGKKINDAQNILLNTPKKAAYFLTKLLNSAISNATNNHGMSGDLLYVFECVANQGPSMKRTIARAKGSGSVLTKRSSNLVIKLSDNPNERKLLLTQQKELVKKRTMGHKKEKAKQKQKQQ.

Residues glutamate 123–glutamine 144 form a disordered region. Residues valine 125–glutamine 144 are compositionally biased toward basic residues.

This sequence belongs to the universal ribosomal protein uL22 family. Part of the 50S ribosomal subunit.

In terms of biological role, this protein binds specifically to 23S rRNA; its binding is stimulated by other ribosomal proteins, e.g. L4, L17, and L20. It is important during the early stages of 50S assembly. It makes multiple contacts with different domains of the 23S rRNA in the assembled 50S subunit and ribosome. The globular domain of the protein is located near the polypeptide exit tunnel on the outside of the subunit, while an extended beta-hairpin is found that lines the wall of the exit tunnel in the center of the 70S ribosome. This chain is Large ribosomal subunit protein uL22, found in Mycoplasma genitalium (strain ATCC 33530 / DSM 19775 / NCTC 10195 / G37) (Mycoplasmoides genitalium).